The sequence spans 440 residues: 2-alpha-hydroxytaxane 2-O-benzoyltransferase (440 aa).

Active-site proton acceptor residues include His158 and Asp367.

This sequence belongs to the plant acyltransferase family.

It catalyses the reaction 10-deacetyl-2-debenzoylbaccatin III + benzoyl-CoA = 10-deacetylbaccatin III + CoA. Its pathway is alkaloid biosynthesis; taxol biosynthesis; baccatin III from 10-deacetyl-2-debenzoylbaccatin III: step 1/2. Catalyzes the conversion of 2-debenzoyl-7,13-diacetylbaccatin III, a semisynthetic substrate, to 7,13-diacetylbaccatin III. This chain is 2-alpha-hydroxytaxane 2-O-benzoyltransferase, found in Taxus cuspidata (Japanese yew).